The following is a 419-amino-acid chain: Multiple organellar RNA editing factor 1, mitochondrial (419 aa).

The N-terminal 60 residues, 1–60 (MAMISHRLRRALLTATSYVNRSISSSITPASDFPSVSAAVLKRSVIGRSTEVATRAPARL), are a transit peptide targeting the mitochondrion. The disordered stretch occupies residues 174–401 (KEYGGDKYEN…AGQPGSDQVR (228 aa)). Positions 237–252 (GPQQGYATPGQGQGTQ) are enriched in low complexity. Residues 310–327 (GQGGSGNYSQGPQGGYNQ) are compositionally biased toward gly residues. A compositionally biased stretch (low complexity) spans 342–356 (GPASGAGNLGPAPGA). Residues 357-367 (GNPGYGQGYSG) show a composition bias toward gly residues. Polar residues predominate over residues 371–401 (EQNQTFPQADQRNRDWNNNNPAGQPGSDQVR).

The protein belongs to the MORF family. Homodimer and heterodimer with MORF3. Heterodimers with MORF8/RIP1, MORF4/RIP4 and MORF6/RIP6. Interacts with PCMP-E90/MEF13. Interacts with PCMP-H13/MEF35.

The protein localises to the mitochondrion. In terms of biological role, involved in organellar RNA editing. Required for the processing of numerous RNA editing sites in mitochondria. Binds to the mitochondrial MEF19 and MEF21 factors, two pentatricopeptide repeat-containing proteins involved in RNA editing. This chain is Multiple organellar RNA editing factor 1, mitochondrial, found in Arabidopsis thaliana (Mouse-ear cress).